Here is a 197-residue protein sequence, read N- to C-terminus: RING-H2 finger protein ATL80 (197 aa).

Residues 30–50 (LVVILAALLCALICVLGLIAV) form a helical membrane-spanning segment. The segment at 111–153 (CAICLAEFSAGDELRVLPQCGHGFHVACIDTWLGSHSSCPSCR) adopts an RING-type; atypical zinc-finger fold. The segment at 168–197 (PGSSSSGLESEPEIEIRIKQGEDDPNSFLP) is disordered.

This sequence belongs to the RING-type zinc finger family. ATL subfamily.

The protein resides in the membrane. It catalyses the reaction S-ubiquitinyl-[E2 ubiquitin-conjugating enzyme]-L-cysteine + [acceptor protein]-L-lysine = [E2 ubiquitin-conjugating enzyme]-L-cysteine + N(6)-ubiquitinyl-[acceptor protein]-L-lysine.. Its pathway is protein modification; protein ubiquitination. May be involved in the early steps of the plant defense signaling pathway. In Arabidopsis thaliana (Mouse-ear cress), this protein is RING-H2 finger protein ATL80 (ATL80).